A 111-amino-acid chain; its full sequence is DNA-directed RNA polymerase subunit Rpo11 (111 aa).

This sequence belongs to the archaeal Rpo11/eukaryotic RPB11/RPC19 RNA polymerase subunit family. Part of the RNA polymerase complex.

It is found in the cytoplasm. The enzyme catalyses RNA(n) + a ribonucleoside 5'-triphosphate = RNA(n+1) + diphosphate. In terms of biological role, DNA-dependent RNA polymerase (RNAP) catalyzes the transcription of DNA into RNA using the four ribonucleoside triphosphates as substrates. This chain is DNA-directed RNA polymerase subunit Rpo11, found in Thermoplasma acidophilum (strain ATCC 25905 / DSM 1728 / JCM 9062 / NBRC 15155 / AMRC-C165).